The sequence spans 343 residues: Pseudaminic acid synthase (343 aa).

In terms of domain architecture, AFP-like spans 287–343 (SLYASKDIKKGEIFSEENVKSVRPSFGLHPKFYQELLGKKASKDIEFGDALKESDFR).

The protein belongs to the pseudaminic acid synthase family. A divalent metal cation serves as cofactor.

It catalyses the reaction 2,4-diacetamido-2,4,6-trideoxy-beta-L-altrose + phosphoenolpyruvate + H2O = pseudaminate + phosphate. Functionally, catalyzes the fifth step in the biosynthesis of pseudaminic acid, a sialic-acid-like sugar that is used to modify flagellin. Catalyzes the condensation of phosphoenolpyruvate with 2,4-diacetamido-2,4,6-trideoxy-beta-l-altropyranose, forming pseudaminic acid. This Campylobacter jejuni subsp. jejuni serotype O:23/36 (strain 81-176) protein is Pseudaminic acid synthase (pseI).